A 708-amino-acid chain; its full sequence is MISEIGKAAVAEMGILLARFREDHNKLWLIGTATCETYLRCQVYHSTMENDWDLQAVPIASRSPHPGIFPRLGNERILGSSMEPLNPLKSFTGSVPVLSSRGPGNLNPRLRKSCCPQCTEKFEQELAKLVSEFANQSSEDKSESPRPQLPQWLQNAKLNNDSKVTALSQSKDQALLQQKTQELQKKWNDTCLQLHPNFQQNIGPERTVSPALCMPGLYNPNLLLRQPLQPKLQPSKNLGVSLQLNTTQMASKPQEKAASPPGSPVRTDLVLGPKQTETTPEKTLEDQAKDFLSRISSVPQNKFLDKFASALDADTFKRLLKGLMEKAWWQQDAASSVASAVSRCRLGNGRQRGGAPKGDIWLLFSGPDRFAKRKMASVLAEQFCGNSPIMICLGSRRDDEESDLGFRGKTALDRIAEAVRRNPVSVIMLEDIDEANVLIRGSIKRAMDRGKLTDSHGREISLGNVIFILTGNWSTMSPESYRNEYLMEEKKLVSLASSNWQLRLSLGEKSAKRRASWLHDEDRPTRPRKELNLGLAFDLNEAADVEDYRTDGSHNSSDLTVDHEEEPGLENRRFAIASVPHDLVSSVDDTIPFKLIEFSFARREIKKTISKKFSMVVDDKVSIEVEDDIVDRILGGLWRGQTSLEQWVEKVLGPSFDQLQPRLSTLDENAVVRLQLELYTALKGQSNGECLPSKVTIVADGQVMSTTS.

Residues 248–283 (QMASKPQEKAASPPGSPVRTDLVLGPKQTETTPEKT) are disordered. Positions 537 to 541 (FDLNE) match the EAR motif.

It belongs to the ClpA/ClpB family.

Probable component of a transcriptional corepressor complex that acts downstream of MAX2 to negatively regulate karrikins/strigolactone responses. Involved in the (-)-germacrene D signaling pathway influencing plant fitness and occurring in the stigma in a KAI2IA-dependent manner. In Petunia hybrida (Petunia), this protein is Protein SUPPRESSOR OF MAX2 1A.